The primary structure comprises 712 residues: Nucleolin (712 aa).

A disordered region spans residues 1–305; the sequence is MVKLAKAGKN…KKQKVEGTEP (305 aa). K9, K15, and K16 each carry N6-acetyllysine. Residues 24–43 show a composition bias toward acidic residues; the sequence is VEEDSEDEEMSEDEEDDSSG. 4 positions are modified to phosphoserine: S28, S34, S41, and S42. Positions 56–107 are enriched in low complexity; sequence AAATSAKKVVVSPTKKVAVATPAKKAAVTPGKKAAATPAKKTVTPAKAVTTP. Repeat unit 1 spans residues 58-65; the sequence is ATSAKKVV. Residues 58 to 135 are 8 X 8 AA tandem repeats of X-T-P-X-K-K-X-X; the sequence is ATSAKKVVVS…GAAIPAKGAK (78 aa). At S67 the chain carries Phosphoserine. A phosphothreonine mark is found at T69, T76, T84, and T92. Tandem repeats lie at residues 75 to 82, 83 to 90, and 91 to 98. The residue at position 96 (K96) is an N6-acetyllysine. A Phosphothreonine modification is found at T99. The 5; truncated repeat unit spans residues 99–104; the sequence is TPAKAV. K102 bears the N6-acetyllysine mark. Residues 105–112 form repeat 6; it reads TTPGKKGA. At T106 the chain carries Phosphothreonine. At K109 the chain carries N6-acetyllysine. Residue T113 is modified to Phosphothreonine. K116 carries the N6-acetyllysine modification. 2 tandem repeats follow at residues 120–127 and 128–135. Position 121 is a phosphothreonine (T121). Positions 122–137 are enriched in low complexity; it reads PGKKGAAIPAKGAKNG. At K124 the chain carries N6-acetyllysine. Phosphoserine is present on residues S145 and S153. Residues 145–171 show a composition bias toward acidic residues; the sequence is SDEEEEDDSEEDEDDDEDEDEDEDEIE. The segment covering 172–183 has biased composition (low complexity); that stretch reads PAAMKAAAAAPA. S184 and S206 each carry phosphoserine. The segment covering 184 to 211 has biased composition (acidic residues); the sequence is SEDEDDEDDEDDEDEDDDEEDDSEEEAM. Position 214 is a phosphothreonine (T214). A compositionally biased stretch (acidic residues) spans 234–274; sequence EDEDEEEDDEDEDDDDDDDDDDEDDEDEDDEEEEEEEEEEP. Residues 275 to 302 show a composition bias toward basic and acidic residues; the sequence is VKEAPGKRKKEMAKQKAAPEAKKQKVEG. K299 participates in a covalent cross-link: Glycyl lysine isopeptide (Lys-Gly) (interchain with G-Cter in SUMO1); alternate. A Glycyl lysine isopeptide (Lys-Gly) (interchain with G-Cter in SUMO2); alternate cross-link involves residue K299. T303 is modified (phosphothreonine). 2 RRM domains span residues 309-385 and 395-468; these read FNLF…KPKG and RTLL…YTGE. K320 bears the N6-acetyllysine mark. K326 is covalently cross-linked (Glycyl lysine isopeptide (Lys-Gly) (interchain with G-Cter in SUMO1); alternate). K326 participates in a covalent cross-link: Glycyl lysine isopeptide (Lys-Gly) (interchain with G-Cter in SUMO2); alternate. K350 is modified (N6-acetyllysine). Phosphoserine is present on S358. The residue at position 369 (T369) is a Phosphothreonine. K372 is covalently cross-linked (Glycyl lysine isopeptide (Lys-Gly) (interchain with G-Cter in SUMO2)). A Glycyl lysine isopeptide (Lys-Gly) (interchain with G-Cter in SUMO2); alternate cross-link involves residue K379. The residue at position 379 (K379) is an N6-acetyllysine; alternate. 2 positions are modified to N6-acetyllysine: K400 and K405. T407 is modified (phosphothreonine). K429 and K446 each carry N6-acetyllysine. S460 and S462 each carry phosphoserine. Residues K469 and K479 each carry the N6-acetyllysine modification. One can recognise an RRM 3 domain in the interval 488 to 562; it reads KTLVLSNLSY…RAIRLELQGP (75 aa). K515 participates in a covalent cross-link: Glycyl lysine isopeptide (Lys-Gly) (interchain with G-Cter in SUMO2); alternate. An N6-acetyllysine; alternate modification is found at K515. An N6-acetyllysine modification is found at K523. S565 bears the Phosphoserine mark. K574 bears the N6-acetyllysine mark. The 76-residue stretch at 574 to 649 folds into the RRM 4 domain; it reads KTLFVKGLSE…NKVTLDWAKP (76 aa). K579 participates in a covalent cross-link: Glycyl lysine isopeptide (Lys-Gly) (interchain with G-Cter in SUMO2); alternate. K579 is subject to N6-acetyllysine; alternate. Position 582 is a phosphoserine (S582). K591 participates in a covalent cross-link: Glycyl lysine isopeptide (Lys-Gly) (interchain with G-Cter in SUMO1); alternate. Residue K591 forms a Glycyl lysine isopeptide (Lys-Gly) (interchain with G-Cter in SUMO2); alternate linkage. Residues S593 and S621 each carry the phosphoserine modification. A Glycyl lysine isopeptide (Lys-Gly) (interchain with G-Cter in SUMO2) cross-link involves residue K626. Residues 642 to 712 form a disordered region; that stretch reads VTLDWAKPKG…KPQGKKTKFE (71 aa). Residue K648 is modified to N6-acetyllysine. Over residues 652–698 the composition is skewed to gly residues; that stretch reads EGGFGGRGGGRGGFGGRGGGRGGRGGFGGRGRGGFGGRGGFRGGRGG. Asymmetric dimethylarginine occurs at positions 658, 662, 668, 672, 675, 681, 683, 689, and 693. R696 carries the asymmetric dimethylarginine; alternate modification. R696 carries the omega-N-methylarginine; alternate modification. Basic and acidic residues predominate over residues 699–712; it reads GGDHKPQGKKTKFE.

As to quaternary structure, identified in a IGF2BP1-dependent mRNP granule complex containing untranslated mRNAs. Component of the SWAP complex that consists of NPM1, NCL/nucleolin, PARP1 and SWAP70. Component of a complex which is at least composed of HTATSF1/Tat-SF1, the P-TEFb complex components CDK9 and CCNT1, RNA polymerase II, SUPT5H, and NCL/nucleolin. Interacts with AICDA. Interacts with APTX. Interacts with C1QBP. Interacts with ERBB4. Interacts (via C-terminus) with FMR1 isoform 6 (via N-terminus). Interacts with GZF1; this interaction is important for nucleolar localization of GZF1. Interacts with NSUN2. Interacts with NVL. Interacts (via N-terminus domain) with SETX. Interacts (via RRM1 and C-terminal RRM4/Arg/Gly-rich domains) with TERT; the interaction is important for nucleolar localization of TERT. Interacts with WDR46. Interacts with ZFP36. Interacts with LRRC34. Interacts with RRP1B. Interacts with HNRNPU; this interaction occurs during mitosis. Interacts with RIOK1; RIOK1 recruits NCL to the PRMT5 for symmetrically methylation. Interacts with ZBTB7B. Interacts with MDK; this interaction promotes NCL clustering and lateral movements of this complex into lipid rafts leading to MDK internalization. Interacts with HDGF. Interacts with ALKBH2. Interacts with IGFBP5; this interaction is necessary for IGFBP5 localization to the nucleus. Interacts with DDX24 (when ubiquitinated); this interaction may be important during ribosome biogenesis. In terms of processing, some glutamate residues are glycylated by TTLL8. This modification occurs exclusively on glutamate residues and results in a glycine chain on the gamma-carboxyl group. Post-translationally, symmetrically methylated by PRMT5.

The protein localises to the nucleus. It is found in the nucleolus. The protein resides in the cytoplasm. Nucleolin is the major nucleolar protein of growing eukaryotic cells. It is found associated with intranucleolar chromatin and pre-ribosomal particles. It induces chromatin decondensation by binding to histone H1. It is thought to play a role in pre-rRNA transcription and ribosome assembly. May play a role in the process of transcriptional elongation. Binds RNA oligonucleotides with 5'-UUAGGG-3' repeats more tightly than the telomeric single-stranded DNA 5'-TTAGGG-3' repeats. The protein is Nucleolin (NCL) of Pongo abelii (Sumatran orangutan).